The sequence spans 131 residues: Large-conductance mechanosensitive channel (131 aa).

Transmembrane regions (helical) follow at residues 14–34 (VIDL…VTSL) and 67–87 (GSFI…FIFI).

The protein belongs to the MscL family. As to quaternary structure, homopentamer.

The protein localises to the cell membrane. Its function is as follows. Channel that opens in response to stretch forces in the membrane lipid bilayer. May participate in the regulation of osmotic pressure changes within the cell. The polypeptide is Large-conductance mechanosensitive channel (Bacillus pumilus (strain SAFR-032)).